The chain runs to 284 residues: Tropomyosin beta chain (284 aa).

The residue at position 1 (Met1) is an N-acetylmethionine. Residues 1–65 (MDAIKKKMQM…EVEKYSESVK (65 aa)) form a disordered region. Residues 1-284 (MDAIKKKMQM…DNALNDITSL (284 aa)) are a coiled coil. Composition is skewed to basic and acidic residues over residues 12–40 (KLDK…KQLE) and 51–65 (KGTE…ESVK). Phosphothreonine is present on Thr53. Position 61 is a phosphoserine; by PIK3CG (Ser61). At Thr79 the chain carries Phosphothreonine. Ser87 is subject to Phosphoserine. Thr108 bears the Phosphothreonine mark. The disordered stretch occupies residues 117–136 (EKAADESERGMKVIENRAMK). Residues Ser158, Ser206, and Ser215 each carry the phosphoserine modification. Position 252 is a phosphothreonine (Thr252). Residue Tyr261 is modified to Phosphotyrosine. Ser271 bears the Phosphoserine mark. At Thr282 the chain carries Phosphothreonine. The residue at position 283 (Ser283) is a Phosphoserine.

Belongs to the tropomyosin family. As to quaternary structure, homodimer. Heterodimer of an alpha (TPM1, TPM3 or TPM4) and a beta (TPM2) chain. In terms of processing, phosphorylated on Ser-61 by PIK3CG. Phosphorylation on Ser-61 is required for ADRB2 internalization. In terms of tissue distribution, present in primary breast cancer tissue, absent from normal breast tissue.

Its subcellular location is the cytoplasm. The protein resides in the cytoskeleton. Functionally, binds to actin filaments in muscle and non-muscle cells. Plays a central role, in association with the troponin complex, in the calcium dependent regulation of vertebrate striated muscle contraction. Smooth muscle contraction is regulated by interaction with caldesmon. In non-muscle cells is implicated in stabilizing cytoskeleton actin filaments. The non-muscle isoform may have a role in agonist-mediated receptor internalization. The protein is Tropomyosin beta chain (TPM2) of Homo sapiens (Human).